We begin with the raw amino-acid sequence, 87 residues long: Neutrophil antibiotic peptide NP-3B (87 aa).

The signal sequence occupies residues 1-19 (MRTLILLTTLLLLALHTQA). A propeptide spanning residues 20-58 (ESPQGSTKEAPDEEQDISVFFGGDKGTALQDAAVKAGVT) is cleaved from the precursor. Intrachain disulfides connect Cys59–Cys87, Cys61–Cys76, and Cys66–Cys86.

It belongs to the alpha-defensin family.

Its subcellular location is the secreted. Its function is as follows. Active in vitro against S.aureus, fungi, Gram-positive and Gram-negative bacteria and to a lesser extent against an enveloped virus. The polypeptide is Neutrophil antibiotic peptide NP-3B (Rattus norvegicus (Rat)).